The following is a 355-amino-acid chain: Ferrochelatase (355 aa).

Residues histidine 214 and glutamate 295 each contribute to the Fe cation site.

The protein belongs to the ferrochelatase family.

The protein localises to the cytoplasm. The enzyme catalyses heme b + 2 H(+) = protoporphyrin IX + Fe(2+). The protein operates within porphyrin-containing compound metabolism; protoheme biosynthesis; protoheme from protoporphyrin-IX: step 1/1. Catalyzes the ferrous insertion into protoporphyrin IX. In Burkholderia thailandensis (strain ATCC 700388 / DSM 13276 / CCUG 48851 / CIP 106301 / E264), this protein is Ferrochelatase.